Reading from the N-terminus, the 350-residue chain is Phosphotriesterase-related protein (350 aa).

Histidine 22, histidine 24, glutamate 169, histidine 201, histidine 230, and aspartate 298 together coordinate a divalent metal cation.

This sequence belongs to the metallo-dependent hydrolases superfamily. Phosphotriesterase family. Requires a divalent metal cation as cofactor.

This is Phosphotriesterase-related protein from Drosophila persimilis (Fruit fly).